Consider the following 300-residue polypeptide: MNNSHHRLIKSVSYLSVTTALIILIIKLYAWVVTSSQSILASLIDSMLDITSSFINLVALRFALQPPDHYHRFGHEKMQDLTIFSQSIFFFASAFFVGFASVKSLFIKTKPENISDGTIIMYLCMFLTIILVLYQTYVIKKTGSEIVKADKLHYFTDLLTNVIVIISINLSDYFWFVDPLFGVVISLYIFHSSYSLFKKAFKNLVDHELPEQDRQKIISIVNNHSGVKGMHEMKTRYAAQKAFIQCHLEMDGNISLYSAHKISDEIAFEILQKFPEAEIIIHQDPFGIEEHVNYREYIVR.

The next 5 helical transmembrane spans lie at 14–34, 39–59, 87–107, 119–139, and 170–190; these read YLSV…WVVT, ILAS…NLVA, SIFF…SLFI, IIMY…TYVI, and LSDY…LYIF.

Belongs to the cation diffusion facilitator (CDF) transporter (TC 2.A.4) family.

The protein localises to the cell membrane. The sequence is that of Protein p34 (p34) from Rickettsia prowazekii (strain Madrid E).